The following is a 222-amino-acid chain: Protein MKS1 (222 aa).

The segment at 1-61 (MDPSEYFAGG…PNRDQPPPYI (61 aa)) is disordered. A compositionally biased stretch (polar residues) spans 12–21 (PSDQQNQKRQ). S30 is modified (phosphoserine). Over residues 37–46 (DSHKIKKPPK) the composition is skewed to basic residues. A compositionally biased stretch (pro residues) spans 47–61 (HPAPPPNRDQPPPYI). Position 72 is a phosphoserine (S72). The short motif at 83–92 (FMNVVQRLTG) is the VQ element. The interval 105–130 (GDVSPAARLASTENASPRGGKEPAAR) is disordered. 2 positions are modified to phosphoserine: S108 and S120.

As to quaternary structure, interacts with MPK4, WRKY25 and WRKY33. Post-translationally, phosphorylated on serine residue by MPK4.

The protein resides in the nucleus. Regulator of plant defense response. May contribute to MPK4-regulated defense activation by coupling the kinase to specific WRKY transcription factors. This is Protein MKS1 (MKS1) from Arabidopsis thaliana (Mouse-ear cress).